The chain runs to 741 residues: Pentatricopeptide repeat-containing protein At1g05670, mitochondrial (741 aa).

The transit peptide at methionine 1–phenylalanine 21 directs the protein to the mitochondrion. PPR repeat units follow at residues aspartate 174 to leucine 208, serine 209 to tryptophan 244, asparagine 245 to proline 279, aspartate 280 to proline 314, asparagine 315 to proline 349, aspartate 350 to proline 384, aspartate 385 to proline 419, aspartate 420 to proline 454, asparagine 455 to proline 489, asparagine 490 to alanine 524, aspartate 525 to proline 559, threonine 560 to proline 594, asparagine 595 to proline 629, aspartate 630 to valine 664, and serine 665 to alanine 699.

This sequence belongs to the PPR family. P subfamily.

Its subcellular location is the mitochondrion. In Arabidopsis thaliana (Mouse-ear cress), this protein is Pentatricopeptide repeat-containing protein At1g05670, mitochondrial.